The chain runs to 353 residues: Guanine nucleotide-binding protein subunit beta-5 (353 aa).

WD repeat units follow at residues 61–100 (GHGN…KEHA), 103–142 (MPCT…NENM), 151–192 (MHTN…QSFH), 194–236 (HGAD…QAFE), 237–276 (THES…EVAI), 278–320 (SKES…RVSI), and 323–352 (GHEN…LRVW).

Belongs to the WD repeat G protein beta family. Component of a complex composed of RGS9 (isoform RGS9-1), GNB5 and RGS9BP; within this complex, the presence of GNB5 stabilizes both itself and RGS9 and increases RGS9 GTPase-activating protein (GAP) activity. Interacts with RGS7, forming the RGS7-GNB5 complex; within this complex, the presence of GNB5 increases RGS7 GTPase-activating protein (GAP) activity. Interacts with GPR158; promotes the GTPase activator activity of the RGS7-GNB5 complex in absence of glycine, in contrast GTPase activator activity of the RGS7-GNB5 complex is inhibited in presence of glycine. Interacts with RGS6.

It is found in the membrane. In terms of biological role, enhances GTPase-activating protein (GAP) activity of regulator of G protein signaling (RGS) proteins, such as RGS7 and RGS9, hence involved in the termination of the signaling initiated by the G protein coupled receptors (GPCRs) by accelerating the GTP hydrolysis on the G-alpha subunits, thereby promoting their inactivation. Increases RGS7 GTPase-activating protein (GAP) activity, thereby regulating mood and cognition. Increases RGS9 GTPase-activating protein (GAP) activity, hence contributes to the deactivation of G protein signaling initiated by D(2) dopamine receptors. May play an important role in neuronal signaling, including in the parasympathetic, but not sympathetic, control of heart rate. This chain is Guanine nucleotide-binding protein subunit beta-5 (GNB5), found in Oryctolagus cuniculus (Rabbit).